The chain runs to 256 residues: ATP synthase peripheral stalk subunit b, mitochondrial (256 aa).

The N-terminal 42 residues, 1–42 (MLSRVVLSAAATAAPSLKNAAFLGPGVLQATRTFHTGQPHLV), are a transit peptide targeting the mitochondrion. At Lys-131 the chain carries N6-succinyllysine. N6-acetyllysine is present on residues Lys-139, Lys-154, Lys-162, Lys-221, Lys-233, and Lys-244.

The protein belongs to the eukaryotic ATPase B chain family. As to quaternary structure, component of the ATP synthase complex composed at least of ATP5F1A/subunit alpha, ATP5F1B/subunit beta, ATP5MC1/subunit c (homooctomer), MT-ATP6/subunit a, MT-ATP8/subunit 8, ATP5ME/subunit e, ATP5MF/subunit f, ATP5MG/subunit g, ATP5MK/subunit k, ATP5MJ/subunit j, ATP5F1C/subunit gamma, ATP5F1D/subunit delta, ATP5F1E/subunit epsilon, ATP5PF/subunit F6, ATP5PB/subunit b, ATP5PD/subunit d, ATP5PO/subunit OSCP. ATP synthase complex consists of a soluble F(1) head domain (subunits alpha(3) and beta(3)) - the catalytic core - and a membrane F(0) domain - the membrane proton channel (subunits c, a, 8, e, f, g, k and j). These two domains are linked by a central stalk (subunits gamma, delta, and epsilon) rotating inside the F1 region and a stationary peripheral stalk (subunits F6, b, d, and OSCP).

The protein localises to the mitochondrion. It is found in the mitochondrion inner membrane. Functionally, subunit b, of the mitochondrial membrane ATP synthase complex (F(1)F(0) ATP synthase or Complex V) that produces ATP from ADP in the presence of a proton gradient across the membrane which is generated by electron transport complexes of the respiratory chain. ATP synthase complex consist of a soluble F(1) head domain - the catalytic core - and a membrane F(1) domain - the membrane proton channel. These two domains are linked by a central stalk rotating inside the F(1) region and a stationary peripheral stalk. During catalysis, ATP synthesis in the catalytic domain of F(1) is coupled via a rotary mechanism of the central stalk subunits to proton translocation. In vivo, can only synthesize ATP although its ATP hydrolase activity can be activated artificially in vitro. Part of the complex F(0) domain. Part of the complex F(0) domain and the peripheric stalk, which acts as a stator to hold the catalytic alpha(3)beta(3) subcomplex and subunit a/ATP6 static relative to the rotary elements. The polypeptide is ATP synthase peripheral stalk subunit b, mitochondrial (Homo sapiens (Human)).